Here is a 117-residue protein sequence, read N- to C-terminus: Non-specific lipid-transfer protein 2B (117 aa).

An N-terminal signal peptide occupies residues M1 to A25. 4 disulfides stabilise this stretch: C29–C76, C39–C53, C54–C99, and C74–C113.

Belongs to the plant LTP family. Expressed in roots, mesocotyls and developing leaves.

Functionally, plant non-specific lipid-transfer proteins transfer phospholipids as well as galactolipids across membranes. May play a role in wax or cutin deposition in the cell walls of expanding epidermal cells and certain secretory tissues. The chain is Non-specific lipid-transfer protein 2B (LTP2-B) from Oryza sativa subsp. japonica (Rice).